We begin with the raw amino-acid sequence, 145 residues long: Lymphocyte antigen 6 complex locus protein G5c (145 aa).

An N-terminal signal peptide occupies residues 1–38; that stretch reads MSGLAASWSLKPLGPHGVTQALCAVLLAVLVTMNVVLG. Residues 55–145 form the UPAR/Ly6 domain; the sequence is LHCYRCLLET…NPKNRKNTMH (91 aa). 5 cysteine pairs are disulfide-bonded: C57/C84, C60/C69, C76/C102, C111/C128, and C129/C134. Residue N91 is glycosylated (N-linked (GlcNAc...) asparagine).

As to quaternary structure, forms oligomers. Post-translationally, N-glycosylated. As to expression, expression restricted to the caput of epididymis. Detected only from day 24 postnatum.

It localises to the secreted. Functionally, may have a role in hematopoietic cell differentiation. The chain is Lymphocyte antigen 6 complex locus protein G5c (Ly6g5c) from Rattus norvegicus (Rat).